Consider the following 263-residue polypeptide: MLELRLVQGSLLKKVLESIKDLVNDANFDCSSTGFSLQAMDSSHVALVSLLLRSEGFEHYRCDRNLSMGMNLGNMSKMLKCAGNDDIITIKADDGGDTVTFMFESPTQDKIADFEMKLMDIDSEHLGIPDAEYHSIVRMPSNEFSRICKDLSSIGDTVVISVTKEGVKFSTAGDIGTANIVLRQNTTVDKPEDAIVIEMKEPVSLSFALRYMNSFTKATPLSDTVTISLSSELPVVVEYKVAEMGYIRYYLAPKIEEEEDTNP.

The DNA-binding element occupies 61 to 80; that stretch reads RCDRNLSMGMNLGNMSKMLK.

This sequence belongs to the PCNA family. As to quaternary structure, homo- and heterotrimer. Interacts with POLH, ATXR5 and ATXR6.

Its subcellular location is the nucleus. In terms of biological role, this protein is an auxiliary protein of DNA polymerase delta and is involved in the control of eukaryotic DNA replication by increasing the polymerase's processibility during elongation of the leading strand. The polypeptide is Proliferating cellular nuclear antigen 1 (PCNA) (Arabidopsis thaliana (Mouse-ear cress)).